The following is a 1603-amino-acid chain: MRVKPQGLVVTSSAVCSSPDYLREPKYYPGGPPTPRPLLPTRPPASPPDKAFSTHAFSENPRPPPRRDPSTRRPPVLAKGDDPLPPRAARPVSQARCPTPVGDGSSSRRCWDNGRVNLRPVVQLIDIMKDLTRLSQDLQHSGVHLDCGGLRLSRPPAPPPGDLQYSFFSSPSLANSIRSPEERATPHAKSERPSHPLYEPEPEPRDSPQPGQGHSPGATAAATGLPPEPEPDSTDYSELADADILSELASLTCPEAQLLEAQALEPPSPEPEPQLLDPQPRFLDPQALEPLGEALELPPLQPLADPLGLPGLALQALDTLPDSLESQLLDPQALDPLPKLLDVPGRRLEPQQPLGHCPLAEPLRLDLCSPHGPPGPEGHPKYALRRTDRPKILCRRRKAGRGRKADAGPEGRLLPLPMPTGLVAALAEPPPPPPPPPPALPGPGPVSVPELKPESSQTPVVSTRKGKCRGVRRMVVKMAKIPVSLGRRNKTTYKVSSLSSSLSVEGKELGLRVSAEPTPLLKMKNNGRNVVVVFPPGEMPIILKRKRGRPPKNLLLGPGKPKEPAVVAAEAATVAAATMAMPEVKKRRRRKQKLASPQPSYAADANDSKAEYSDVLAKLAFLNRQSQCAGRCSPPRCWTPSEPESVHQAPDTQSISHFLHRVQGFRRRGGKAGGFGGRGGGHAAKSARCSFSDFFEGIGKKKKVVAVAAAGVGGPGLTELGHPRKRGRGEVDAVTGKPKRKRRSRKNGTLFPEQVPSGPGFGEAGAEWAGDKGGGWAPHHGHPGGQAGRNCGFQGTEARAFASTGLESGASGRGSYYSTGAPSGQTELSQERQNLFTGYFRSLLDSDDSSDLLDFALSASRPESRKASGTYAGPPTSALPAQRGLATFPSRGAKASPVAVGSSGAGADPSFQPVLSARQTFPPGRAASYGLTPAASDCRAAETFPKLVPPPSAMARSPTTHPPANTYLPQYGGYGAGQSVFAPTKPFTGQDCANSKDCSFAYGSGNSLPASPSSAHSAGYAPPPTGGPCLPPSKASFFSSSEGAPFSGSAPTPLRCDSRASTVSPGGYMVPKGTTASATSAASAASSSSSSFQPSPENCRQFAGASQWPFRQGYGGLDWASEAFSQLYNPSFDCHVSEPNVILDISNYTPQKVKQQTAVSETFSESSSDSTQFNQPVGGGGFRRANSEASSSEGQSSLSSLEKLMMDWNEASSAPGYNWNQSVLFQSSSKPGRGRRKKVDLFEASHLGFPTSASAAASGYPSKRSTGPRQPRGGRGGGACSAKKERGGAAAKAKFIPKPQPVNPLFQDSPDLGLDYYSGDSSMSPLPSQSRAFGVGERDPCDFIGPYSMNPSTPSDGTFGQGFHCDSPSLGAPELDGKHFPPLAHPPTVFDAGLQKAYSPTCSPTLGFKEELRPPPTKLAACEPLKHGLQGASLGHAAAAQAHLSCRDLPLGQPHYDSPSCKGTAYWYPPGSAARSPPYEGKVGTGLLADFLGRTEAACLSAPHLASPPATPKADKEPLEMARPPGPPRGPAAAAAGYGCPLLSDLTLSPVPRDSLLPLQDTAYRYPGFMPQAHPGLGGGPKSGFLGPMAEPHPEDTFTVTSL.

Disordered stretches follow at residues 19–108, 150–236, 264–285, and 394–467; these read PDYL…SSSR, LRLS…STDY, LEPPSPEPEPQLLDPQPRFLDP, and CRRR…RKGK. Pro residues predominate over residues 30–47; sequence GGPPTPRPLLPTRPPASP. An N6-acetyllysine modification is found at lysine 79. Residues 166 to 178 show a composition bias toward polar residues; sequence SFFSSPSLANSIR. Over residues 179–194 the composition is skewed to basic and acidic residues; that stretch reads SPEERATPHAKSERPS. Residues 216–225 show a composition bias toward low complexity; that stretch reads PGATAAATGL. At serine 268 the chain carries Phosphoserine. A compositionally biased stretch (low complexity) spans 273 to 285; that stretch reads PQLLDPQPRFLDP. The segment at residues 396-408 is a DNA-binding region (a.T hook 1); sequence RRKAGRGRKADAG. The span at 428 to 446 shows a compositional bias: pro residues; sequence EPPPPPPPPPPALPGPGPV. Positions 544 to 556 form a DNA-binding region, a.T hook 2; that stretch reads KRKRGRPPKNLLL. The disordered stretch occupies residues 581-607; the sequence is MPEVKKRRRRKQKLASPQPSYAADAND. Serine 596 is modified (phosphoserine). A Glycyl lysine isopeptide (Lys-Gly) (interchain with G-Cter in SUMO2) cross-link involves residue lysine 609. Disordered stretches follow at residues 717-792 and 806-827; these read LTEL…RNCG and LESGASGRGSYYSTGAPSGQTE. The span at 737–746 shows a compositional bias: basic residues; it reads KPKRKRRSRK. Positions 816 to 827 are enriched in polar residues; it reads YYSTGAPSGQTE. Phosphoserine occurs at positions 829 and 846. Omega-N-methylarginine is present on arginine 891. Serine 896 and serine 1064 each carry phosphoserine. Disordered stretches follow at residues 1159 to 1198 and 1253 to 1286; these read VSETFSESSSDSTQFNQPVGGGGFRRANSEASSSEGQSSL and ASAAASGYPSKRSTGPRQPRGGRGGGACSAKKER. Low complexity-rich tracts occupy residues 1160 to 1171 and 1187 to 1198; these read SETFSESSSDST and SEASSSEGQSSL. Serine 1187 carries the post-translational modification Phosphoserine. Phosphoserine occurs at positions 1322, 1324, and 1399. Threonine 1401 is subject to Phosphothreonine. Serine 1403 carries the post-translational modification Phosphoserine. A Glycyl lysine isopeptide (Lys-Gly) (interchain with G-Cter in SUMO2) cross-link involves residue lysine 1409. The interval 1503 to 1533 is disordered; sequence PHLASPPATPKADKEPLEMARPPGPPRGPAA. Serine 1507 and serine 1549 each carry phosphoserine.

It is found in the nucleus. Its subcellular location is the chromosome. Transcription factor required for the proper patterning of the epidermis, which plays a key role in early epithelial morphogenesis. Directly binds promoter and enhancer regions and acts by maintaining local enhancer-promoter chromatin architecture. Interacts with many sequence-specific zinc-finger transcription factors and methyl-CpG-binding proteins to regulate the expression of mesoderm genes that wire surface ectoderm stratification. This is Transcription factor Gibbin from Homo sapiens (Human).